We begin with the raw amino-acid sequence, 3722 residues long: Vitelline envelope sperm lysin receptor (3722 aa).

The first 24 residues, 1 to 24 (MSGMQWSFGFSCLFFLKTVWICQA), serve as a signal peptide directing secretion. Over 25 to 3698 (FDADTPDPRV…TPSTDMATVQ (3674 aa)) the chain is Extracellular. Disulfide bonds link Cys-43–Cys-141 and Cys-72–Cys-104. A VERL 1 repeat occupies 77-155 (MQMTRGRGIN…SQASNAPEPK (79 aa)). N-linked (GlcNAc...) asparagine glycosylation is found at Asn-115, Asn-122, and Asn-142. A disordered region spans residues 146–169 (SQASNAPEPKASPTSSTPQPEAAS). Polar residues predominate over residues 157-169 (SPTSSTPQPEAAS). N-linked (GlcNAc...) asparagine glycosylation is present at Asn-171. Disulfide bonds link Cys-182/Cys-280 and Cys-211/Cys-243. The VERL 2 repeat unit spans residues 216 to 293 (VPITHEHGFN…KSPDAPKPES (78 aa)). Residue Asn-254 is glycosylated (N-linked (GlcNAc...) asparagine). Residues 279 to 335 (QCYMPKSPDAPKPESCLSSPPEPEASPSSNAPEPETYPTSSAPEKVSSDQPAPSHNQ) form a disordered region. The segment covering 291–312 (PESCLSSPPEPEASPSSNAPEP) has biased composition (low complexity). Residues 315 to 335 (YPTSSAPEKVSSDQPAPSHNQ) are compositionally biased toward polar residues. Residues Asn-334 and Asn-373 are each glycosylated (N-linked (GlcNAc...) asparagine). 2 disulfide bridges follow: Cys-345–Cys-443 and Cys-374–Cys-406. One copy of the VERL 3 repeat lies at 379–455 (VPITQEFGIN…PKSPVAPKPE (77 aa)). Residues Asn-417, Asn-438, Asn-487, Asn-501, Asn-526, Asn-570, Asn-591, Asn-640, Asn-654, Asn-679, Asn-723, Asn-744, Asn-793, Asn-807, Asn-832, Asn-876, Asn-897, Asn-946, Asn-960, Asn-985, Asn-1029, Asn-1050, Asn-1099, Asn-1113, Asn-1138, Asn-1182, Asn-1203, Asn-1252, Asn-1266, Asn-1291, Asn-1335, Asn-1356, Asn-1405, Asn-1419, Asn-1443, and Asn-1487 are each glycosylated (N-linked (GlcNAc...) asparagine). Residues 443–488 (CYMPKSPVAPKPETGPTSNAPEPETYPTSSAPEKVSSDQPAPSHNQ) are disordered. The segment covering 457–488 (GPTSNAPEPETYPTSSAPEKVSSDQPAPSHNQ) has biased composition (polar residues). Residues 532–608 (VPITQEFGIN…PKSPVAPKPE (77 aa)) form a VERL 4 repeat. Residues 603-641 (VAPKPETGPTSNAPEPETYPTSSAPEKVSSDQPAPSHNQ) form a disordered region. Residues 610 to 641 (GPTSNAPEPETYPTSSAPEKVSSDQPAPSHNQ) are compositionally biased toward polar residues. The VERL 5 repeat unit spans residues 685-761 (VPITQEFGIN…PKSPVAPKPE (77 aa)). The interval 756–794 (VAPKPETGPSSNAPEPETYPTSSAPEKVSSDQPAPSHNQ) is disordered. The segment covering 763-794 (GPSSNAPEPETYPTSSAPEKVSSDQPAPSHNQ) has biased composition (polar residues). The VERL 6 repeat unit spans residues 838-914 (VPITQEFGIN…PKSPVAPKPE (77 aa)). The segment at 909 to 947 (VAPKPETGPTSNAPEPETYPTSSAPEKVSSDQPAPSHNQ) is disordered. The segment covering 916-947 (GPTSNAPEPETYPTSSAPEKVSSDQPAPSHNQ) has biased composition (polar residues). The stretch at 991–1067 (VPITHEFGIN…PKSPVAPKPE (77 aa)) is one VERL 7 repeat. Residues 1062-1100 (VAPKPETGPTSNAPEPETYPTSSAPEKVSSDQPAPSHNQ) are disordered. The span at 1069 to 1100 (GPTSNAPEPETYPTSSAPEKVSSDQPAPSHNQ) shows a compositional bias: polar residues. The VERL 8 repeat unit spans residues 1144-1220 (VPITQEFGIN…PKSPVAPKPE (77 aa)). The tract at residues 1215–1253 (VAPKPETGPTSNAPEPETYPTSSAPEKVSSDQPAPSHNQ) is disordered. Over residues 1222–1253 (GPTSNAPEPETYPTSSAPEKVSSDQPAPSHNQ) the composition is skewed to polar residues. The stretch at 1297–1373 (VPITHKFGIN…PKSPVAHKPE (77 aa)) is one VERL 9 repeat. Positions 1368–1406 (VAHKPETGPTSNAPEPETYPTSSAPEKVSSDQPAPSHNQ) are disordered. Positions 1375-1406 (GPTSNAPEPETYPTSSAPEKVSSDQPAPSHNQ) are enriched in polar residues. One copy of the VERL 10 repeat lies at 1449-1525 (VPITHEFGIN…PKSPVAPKPE (77 aa)). The disordered stretch occupies residues 1519–1556 (PVAPKPETGPSSNAPEPETYPTSSAPEKVYSDQPAPSH). Over residues 1527-1543 (GPSSNAPEPETYPTSSA) the composition is skewed to polar residues. 60 N-linked (GlcNAc...) asparagine glycosylation sites follow: Asn-1557, Asn-1571, Asn-1596, Asn-1640, Asn-1661, Asn-1710, Asn-1724, Asn-1749, Asn-1793, Asn-1814, Asn-1863, Asn-1877, Asn-1902, Asn-1946, Asn-1967, Asn-2016, Asn-2030, Asn-2055, Asn-2099, Asn-2120, Asn-2169, Asn-2183, Asn-2208, Asn-2252, Asn-2273, Asn-2322, Asn-2336, Asn-2361, Asn-2405, Asn-2426, Asn-2475, Asn-2489, Asn-2514, Asn-2558, Asn-2579, Asn-2628, Asn-2642, Asn-2667, Asn-2711, Asn-2732, Asn-2781, Asn-2795, Asn-2820, Asn-2864, Asn-2885, Asn-2934, Asn-2948, Asn-2973, Asn-3017, Asn-3038, Asn-3087, Asn-3101, Asn-3126, Asn-3170, Asn-3191, Asn-3229, Asn-3243, Asn-3268, Asn-3312, and Asn-3333. The stretch at 1602-1678 (VPITHEFGIN…PKSPVAPKPE (77 aa)) is one VERL 11 repeat. Positions 1672 to 1711 (PVAPKPETGPTSNAPEPQTYPTSSAPEKVSSDQPAPSHNQ) are disordered. Residues 1680–1711 (GPTSNAPEPQTYPTSSAPEKVSSDQPAPSHNQ) show a composition bias toward polar residues. The stretch at 1755-1831 (VPITQEFGIN…PKSPVAPKPE (77 aa)) is one VERL 12 repeat. The tract at residues 1826 to 1864 (VAPKPETGPTSNAPEPETYPTSSAPEKVSSDQPAPSHNQ) is disordered. The segment covering 1833–1864 (GPTSNAPEPETYPTSSAPEKVSSDQPAPSHNQ) has biased composition (polar residues). One copy of the VERL 13 repeat lies at 1908–1984 (VPITHEFGIN…PKSPVAPKPE (77 aa)). A disordered region spans residues 1979–2017 (VAPKPETGPTSNAPEPETYPTSSAPEKVSSDQPAPSHNQ). Residues 1986-2017 (GPTSNAPEPETYPTSSAPEKVSSDQPAPSHNQ) are compositionally biased toward polar residues. Residues 2061–2137 (VPITQEFGIN…PKSPVAPKPE (77 aa)) form a VERL 14 repeat. Positions 2132–2170 (VAPKPETGPTSNAPEPETYPTSSAPEKVSSDQPAPSHNQ) are disordered. The segment covering 2139-2170 (GPTSNAPEPETYPTSSAPEKVSSDQPAPSHNQ) has biased composition (polar residues). The stretch at 2214–2290 (VPITQEFGIN…PKSPVAPKPE (77 aa)) is one VERL 15 repeat. Residues 2285 to 2323 (VAPKPETGPTSNAPEPETYPTSSAPEKVSSDQPAPSHNQ) form a disordered region. Residues 2292 to 2323 (GPTSNAPEPETYPTSSAPEKVSSDQPAPSHNQ) show a composition bias toward polar residues. The VERL 16 repeat unit spans residues 2367 to 2443 (VPITQEFGIN…PKSPVAPKPE (77 aa)). Residues 2438-2476 (VAPKPETGPTSNAPEPETYPTSSAPEKVSSDQPAPSHNQ) are disordered. The segment covering 2445 to 2476 (GPTSNAPEPETYPTSSAPEKVSSDQPAPSHNQ) has biased composition (polar residues). The stretch at 2520–2596 (VPITQEFGIN…PKSPVAPKPE (77 aa)) is one VERL 17 repeat. The interval 2590 to 2629 (PVAPKPETGPTSNAPEPQTYPTSSAPEKVSSDQPAPSHNQ) is disordered. The span at 2598–2629 (GPTSNAPEPQTYPTSSAPEKVSSDQPAPSHNQ) shows a compositional bias: polar residues. The VERL 18 repeat unit spans residues 2673 to 2749 (VPITQEFGIN…PKSPVAPKPE (77 aa)). Residues 2744-2782 (VAPKPETGPTSNAPEPETYPTSSAPEKVSSDQPAPSHNQ) are disordered. Over residues 2751-2782 (GPTSNAPEPETYPTSSAPEKVSSDQPAPSHNQ) the composition is skewed to polar residues. One copy of the VERL 19 repeat lies at 2826–2902 (VPITHEFGIN…PKSPVAPKPE (77 aa)). Residues 2897 to 2935 (VAPKPETGPTSNAPEPQTYPTSSAPEKVSSDQPAPSHNQ) form a disordered region. Residues 2904 to 2935 (GPTSNAPEPQTYPTSSAPEKVSSDQPAPSHNQ) show a composition bias toward polar residues. One copy of the VERL 20 repeat lies at 2979–3055 (VPITQEFGIN…PKSPVAPKPE (77 aa)). The interval 3050–3088 (VAPKPETGPTSNAPEPETYPTSSAPEKVSSDQPAPSHNQ) is disordered. A compositionally biased stretch (polar residues) spans 3057–3088 (GPTSNAPEPETYPTSSAPEKVSSDQPAPSHNQ). One copy of the VERL 21 repeat lies at 3132–3208 (VPITQEFGIN…PKSPVAPKPE (77 aa)). Residues 3205 to 3230 (PKPETYPTSSAPEKVSSDQPAPSHNQ) are disordered. The span at 3210-3230 (YPTSSAPEKVSSDQPAPSHNQ) shows a compositional bias: polar residues. One copy of the VERL 22 repeat lies at 3274–3351 (VPITHEFGIN…KSPVAPKPEA (78 aa)). The disordered stretch occupies residues 3345-3407 (VAPKPEASPT…RKSNQTTSTE (63 aa)). Over residues 3352–3375 (SPTSNAPEPQTYPTSSAPGTSPEG) the composition is skewed to polar residues. 6 N-linked (GlcNAc...) asparagine glycosylation sites follow: Asn-3388, Asn-3401, Asn-3449, Asn-3456, Asn-3559, and Asn-3650. In terms of domain architecture, ZP spans 3408–3670 (DVLDDTSNYI…SSCSNQRRTR (263 aa)). A helical transmembrane segment spans residues 3699 to 3719 (VALLVAVALLITQLAGLAIYV). At 3720–3722 (NIN) the chain is on the cytoplasmic side.

In terms of assembly, may form disulfide-linked homodimers. Interacts (via VERL repeats) with sperm lysin. Each VERL chain can bind numerous lysin molecules. Post-translationally, N-glycosylated. About half of the glycoprotein mass corresponds to carbohydrate chains. N-glycosylation is not required for lysin binding. O-glycosylated. O-glycosylation is not required for lysin binding.

It localises to the cell membrane. The protein resides in the secreted. Its subcellular location is the extracellular space. The protein localises to the extracellular matrix. In terms of biological role, structural component of the egg vitelline envelope; forms long filaments. Functions as a species-specific receptor for the sperm protein lysin; prevents fertilization by sperm from other species. Each VERL chain can bind multiple copies of the sperm protein lysin; this creates a 3 um hole in the egg vitelline envelope through which the sperm passes. The polypeptide is Vitelline envelope sperm lysin receptor (Haliotis rufescens (California red abalone)).